A 309-amino-acid polypeptide reads, in one-letter code: Anamorsin homolog (309 aa).

The interval 4 to 169 (VSPGHSVLLL…SYEVGSSAQL (166 aa)) is N-terminal SAM-like domain. The tract at residues 170 to 218 (TLSFAKKKQVEKPKLDENTAKIWSLSAVDMNDDDIDLLDPDELLDEEDL) is linker. [2Fe-2S] cluster contacts are provided by cysteine 230, cysteine 242, cysteine 245, and cysteine 247. Residues 230–247 (CGTGGDTKKRKACKNCTC) are fe-S binding site A. Positions 270, 273, 281, and 284 each coordinate [4Fe-4S] cluster. 2 short sequence motifs (cx2C motif) span residues 270–273 (CGNC) and 281–284 (CASC). The fe-S binding site B stretch occupies residues 270–284 (CGNCYLGDAFRCASC).

The protein belongs to the anamorsin family. In terms of assembly, monomer. [2Fe-2S] cluster serves as cofactor. [4Fe-4S] cluster is required as a cofactor.

The protein localises to the cytoplasm. It is found in the mitochondrion intermembrane space. Functionally, component of the cytosolic iron-sulfur (Fe-S) protein assembly (CIA) machinery. Required for the maturation of extramitochondrial Fe-S proteins. Part of an electron transfer chain functioning in an early step of cytosolic Fe-S biogenesis, facilitating the de novo assembly of a [4Fe-4S] cluster on the cytosolic Fe-S scaffold complex. Electrons are transferred from NADPH via a FAD- and FMN-containing diflavin oxidoreductase. Together with the diflavin oxidoreductase, also required for the assembly of the diferric tyrosyl radical cofactor of ribonucleotide reductase (RNR), probably by providing electrons for reduction during radical cofactor maturation in the catalytic small subunit. The chain is Anamorsin homolog from Branchiostoma floridae (Florida lancelet).